A 270-amino-acid chain; its full sequence is Sorting nexin-11 (270 aa).

A PX domain is found at 16–132 (VITVRVQDPR…HLFLQSQLSV (117 aa)). A 1,2-diacyl-sn-glycero-3-phospho-(1D-myo-inositol-3-phosphate)-binding residues include R59, K85, and R99. The tract at residues 135–139 (IEACV) is important for membrane trafficking. The span at 168 to 177 (SSSHLAKGDQ) shows a compositional bias: basic and acidic residues. Residues 168 to 203 (SSSHLAKGDQPKSCCFLPRSGRRSSPSPPPSEEKDH) are disordered.

Belongs to the sorting nexin family. As to quaternary structure, monomer. Interacts with TRPV3; this interaction promotes TRPV3 trafficking from the cell membrane to lysosome for degradation.

The protein resides in the cell membrane. The protein localises to the endosome. It localises to the cytoplasm. Its function is as follows. Phosphoinositide-binding protein involved in protein sorting and membrane trafficking in endosomes. Regulates the levels of TRPV3 by promoting its trafficking from the cell membrane to lysosome for degradation. In Homo sapiens (Human), this protein is Sorting nexin-11 (SNX11).